Reading from the N-terminus, the 154-residue chain is Endoribonuclease YbeY (154 aa).

Zn(2+) is bound by residues His117, His121, and His127.

Belongs to the endoribonuclease YbeY family. It depends on Zn(2+) as a cofactor.

The protein localises to the cytoplasm. In terms of biological role, single strand-specific metallo-endoribonuclease involved in late-stage 70S ribosome quality control and in maturation of the 3' terminus of the 16S rRNA. The chain is Endoribonuclease YbeY from Polaromonas sp. (strain JS666 / ATCC BAA-500).